The chain runs to 270 residues: 4-hydroxy-4-methyl-2-oxoglutarate aldolase tasA (270 aa).

The Proton acceptor role is filled by H49. E156 and D182 together coordinate a divalent metal cation. D182 is a substrate binding site.

It belongs to the HpcH/HpaI aldolase family. As to quaternary structure, homohexamer; trimer of dimers. Co(2+) is required as a cofactor. It depends on Mn(2+) as a cofactor. Requires Zn(2+) as cofactor. Fe(2+) serves as cofactor. The cofactor is Mg(2+).

It catalyses the reaction 4-hydroxy-4-methyl-2-oxoglutarate = 2 pyruvate. Its pathway is secondary metabolite biosynthesis. 4-hydroxy-4-methyl-2-oxoglutarate aldolase; part of the gene cluster that mediates the biosynthesis of the tetramic acids Sch210971 and Sch210972, potential anti-HIV fungal natural product that contain a decalin core. The PKS module of tasS together with the enoylreductase tasC catalyze the formation of the polyketide unit which is then conjugated to 4-hydroxyl-4-methyl glutamate (HMG) by the condensation domain of the tasS NRPS module. One unique structural feature of Sch210971 and Sch210972 is the tetramic acid motif proposed to be derived from the non-proteinogenic amino acid HMG, by a Dieckmann-type condensation catalyzed by the reductase domain of tasS. The aldolase tasA catalyzes the aldol condensation of 2 molecules of pyruvic acid to yield the intermediate 4-hydroxyl-4-methyl-2-oxoglutarate (HMOG), which can then be stereoselectively transaminated, may be by tasG, to form HMG. The Diels-Alderase tas3 then uses the Dieckmann product of tasS as substrate and catalyzes the Diels-Alder cycloaddition to form the decalin ring of Sch210971 and Sch210972. The sequence is that of 4-hydroxy-4-methyl-2-oxoglutarate aldolase tasA from Hapsidospora irregularis.